The primary structure comprises 164 residues: 2S seed storage protein 3 (164 aa).

An N-terminal signal peptide occupies residues methionine 1 to alanine 21. 2 consecutive propeptides follow at residues serine 22–asparagine 37 and glycine 73–aspartate 81.

The protein belongs to the 2S seed storage albumins family. In terms of assembly, the mature protein consists of a small and a large chain linked by disulfide bonds. Interacts with AHK2.

Its function is as follows. This is a 2S seed storage protein. The protein is 2S seed storage protein 3 (AT2S3) of Arabidopsis thaliana (Mouse-ear cress).